Reading from the N-terminus, the 126-residue chain is C-type natriuretic peptide (126 aa).

The N-terminal stretch at 1–23 is a signal peptide; sequence MHLSQLIACALLLALLSLRPSEA. The tract at residues 20–73 is disordered; it reads PSEAKPGTPPKVPRTPPGEELADSQAAGGNQKKGDKTPGSGGANLKGDRSRLLR. A propeptide spanning residues 24–73 is cleaved from the precursor; that stretch reads KPGTPPKVPRTPPGEELADSQAAGGNQKKGDKTPGSGGANLKGDRSRLLR. Positions 26 to 35 are enriched in pro residues; the sequence is GTPPKVPRTP. Residues Cys-110 and Cys-126 are joined by a disulfide bond.

This sequence belongs to the natriuretic peptide family. Degraded by IDE (in vitro).

It localises to the secreted. In terms of biological role, hormone which plays a role in endochondral ossification through regulation of cartilaginous growth plate chondrocytes proliferation and differentiation. May also be vasoactive and natriuretic. Acts by specifically binding and stimulating NPR2 to produce cGMP. Binds the clearance receptor NPR3. This chain is C-type natriuretic peptide (Nppc), found in Mus musculus (Mouse).